A 368-amino-acid polypeptide reads, in one-letter code: Large ribosomal subunit protein mL46 (368 aa).

Positions 53–81 (TATATTTTTLPPPHPPVTTSTGTHAATST) are disordered. Over residues 69–81 (VTTSTGTHAATST) the composition is skewed to low complexity.

Belongs to the mitochondrion-specific ribosomal protein mL46 family. As to quaternary structure, component of the mitochondrial large ribosomal subunit (mt-LSU). Mature N.crassa 74S mitochondrial ribosomes consist of a small (37S) and a large (54S) subunit. The 37S small subunit contains a 16S ribosomal RNA (16S mt-rRNA) and 32 different proteins. The 54S large subunit contains a 23S rRNA (23S mt-rRNA) and 42 different proteins.

The protein resides in the mitochondrion. Its function is as follows. Component of the mitochondrial ribosome (mitoribosome), a dedicated translation machinery responsible for the synthesis of mitochondrial genome-encoded proteins, including at least some of the essential transmembrane subunits of the mitochondrial respiratory chain. The mitoribosomes are attached to the mitochondrial inner membrane and translation products are cotranslationally integrated into the membrane. The sequence is that of Large ribosomal subunit protein mL46 (mrpl17) from Neurospora crassa (strain ATCC 24698 / 74-OR23-1A / CBS 708.71 / DSM 1257 / FGSC 987).